The sequence spans 354 residues: MIDAISFKNGTFRYLDQRFLPLQEIHVETKNHQEAIEAIKTLAVRGAPLIGASAGYTVVLGINEYTGDKAGFPEYFKNLIAEVNASRPTAVNLFFATKKMQEVYDANFENDSLEALFAKMTDMAYKIHNDEIDNCDKIARHGVELLKQDFADVLKTRKLNVLTHCNTGTLACCGIGTALGVIRLAYQEGLIERVITSESRPLLQGLRLTAWELEHDGIPFASISDSSSAILMQRGMIDFAITGADRITANGDTANKIGTYAHAISARYHGLPFYIAAPVSTIDITMAEGSEIPIEERNPDELRKIFGTQVATPTTPVVNFAFDVTPGTLIRGIITEKGAVVGNYNEGLARVVNG.

Substrate is bound by residues 45–47 (RGA), Arg-87, and Gln-204. Asp-245 serves as the catalytic Proton donor. 255–256 (NK) is a binding site for substrate.

It belongs to the eIF-2B alpha/beta/delta subunits family. MtnA subfamily.

It catalyses the reaction 5-(methylsulfanyl)-alpha-D-ribose 1-phosphate = 5-(methylsulfanyl)-D-ribulose 1-phosphate. It participates in amino-acid biosynthesis; L-methionine biosynthesis via salvage pathway; L-methionine from S-methyl-5-thio-alpha-D-ribose 1-phosphate: step 1/6. In terms of biological role, catalyzes the interconversion of methylthioribose-1-phosphate (MTR-1-P) into methylthioribulose-1-phosphate (MTRu-1-P). This Chlorobaculum tepidum (strain ATCC 49652 / DSM 12025 / NBRC 103806 / TLS) (Chlorobium tepidum) protein is Methylthioribose-1-phosphate isomerase.